We begin with the raw amino-acid sequence, 178 residues long: MIKTLHELLKDKVPIAVLGKTHGLNGELRLFPLTNMPEVIESLEEVFIYNEKVKKLLIGRIIHMSLANGYYIVKFRGIDTLNDAKKFVGSTLYIEKSRLPILSSDEYYFYEVIGMKVYDEKGIFLGNIDEVIQTGSNDVFVINKDTKDEILIPVIKEYVLQIDKKSNKIVVKLPEWLD.

The PRC barrel domain occupies 104–177; it reads SDEYYFYEVI…KIVVKLPEWL (74 aa).

The protein belongs to the RimM family. In terms of assembly, binds ribosomal protein uS19.

Its subcellular location is the cytoplasm. An accessory protein needed during the final step in the assembly of 30S ribosomal subunit, possibly for assembly of the head region. Essential for efficient processing of 16S rRNA. May be needed both before and after RbfA during the maturation of 16S rRNA. It has affinity for free ribosomal 30S subunits but not for 70S ribosomes. The chain is Ribosome maturation factor RimM from Thermosipho melanesiensis (strain DSM 12029 / CIP 104789 / BI429).